A 636-amino-acid chain; its full sequence is Cysteine-rich receptor-like protein kinase 24 (636 aa).

The signal sequence occupies residues 1-20; it reads MVKFLVIFWFVVISFSHVSA. Gnk2-homologous domains are found at residues 21–124 and 130–235; these read QVCL…NRSF and MEIL…LYPF. Residues 21–254 lie on the Extracellular side of the membrane; that stretch reads QVCLERSGFF…RQKDGKSIST (234 aa). 8 N-linked (GlcNAc...) asparagine glycosylation sites follow: asparagine 33, asparagine 50, asparagine 98, asparagine 101, asparagine 121, asparagine 137, asparagine 145, and asparagine 197. The chain crosses the membrane as a helical span at residues 255 to 275; that stretch reads GAIVAIIVVPILLLALGVGLW. Residues 276–636 lie on the Cytoplasmic side of the membrane; sequence KRRKAYKTKT…SVSVTCVSPR (361 aa). In terms of domain architecture, Protein kinase spans 312–585; the sequence is FHNVNKLGHG…TMSTVFHMLT (274 aa). ATP contacts are provided by residues 318-326 and lysine 340; that span reads LGHGGFGEV. The Proton acceptor role is filled by aspartate 437.

The protein belongs to the protein kinase superfamily. Ser/Thr protein kinase family. CRK subfamily.

Its subcellular location is the membrane. It carries out the reaction L-seryl-[protein] + ATP = O-phospho-L-seryl-[protein] + ADP + H(+). It catalyses the reaction L-threonyl-[protein] + ATP = O-phospho-L-threonyl-[protein] + ADP + H(+). The polypeptide is Cysteine-rich receptor-like protein kinase 24 (CRK24) (Arabidopsis thaliana (Mouse-ear cress)).